Here is a 565-residue protein sequence, read N- to C-terminus: Hemagglutinin-neuraminidase (565 aa).

The Intravirion portion of the chain corresponds to 1 to 19; it reads MVAEDAPVRATCRVLFRTT. Residues 20–40 form a helical membrane-spanning segment; it reads TLIFLCTLLALSISILYESLI. At 41–565 the chain is on the virion surface side; it reads TQKQIMSQAG…VPFIRQVTLS (525 aa). A glycan (N-linked (GlcNAc...) asparagine; by host) is linked at N139. 3 disulfide bridges follow: C161–C185, C175–C236, and C227–C240. The segment at 223–228 is involved in neuraminidase activity; sequence NRKSCS. The N-linked (GlcNAc...) asparagine; by host glycan is linked to N267. Disulfide bonds link C333-C454, C365-C375, and C448-C458. N504 carries N-linked (GlcNAc...) asparagine; by host glycosylation. An intrachain disulfide couples C528 to C539.

This sequence belongs to the paramyxoviruses hemagglutinin-neuraminidase family. In terms of assembly, homotetramer; composed of disulfide-linked homodimers. Interacts with F protein trimer.

The protein localises to the virion membrane. The protein resides in the host cell membrane. It catalyses the reaction Hydrolysis of alpha-(2-&gt;3)-, alpha-(2-&gt;6)-, alpha-(2-&gt;8)- glycosidic linkages of terminal sialic acid residues in oligosaccharides, glycoproteins, glycolipids, colominic acid and synthetic substrates.. In terms of biological role, attaches the virus to sialic acid-containing cell receptors and thereby initiating infection. Binding of HN protein to the receptor induces a conformational change that allows the F protein to trigger virion/cell membranes fusion. Its function is as follows. Neuraminidase activity ensures the efficient spread of the virus by dissociating the mature virions from the neuraminic acid containing glycoproteins. In Canis lupus familiaris (Dog), this protein is Hemagglutinin-neuraminidase (HN).